The sequence spans 89 residues: Small ribosomal subunit protein uS15 (89 aa).

It belongs to the universal ribosomal protein uS15 family. In terms of assembly, part of the 30S ribosomal subunit. Forms a bridge to the 50S subunit in the 70S ribosome, contacting the 23S rRNA.

In terms of biological role, one of the primary rRNA binding proteins, it binds directly to 16S rRNA where it helps nucleate assembly of the platform of the 30S subunit by binding and bridging several RNA helices of the 16S rRNA. Functionally, forms an intersubunit bridge (bridge B4) with the 23S rRNA of the 50S subunit in the ribosome. The protein is Small ribosomal subunit protein uS15 of Corynebacterium diphtheriae (strain ATCC 700971 / NCTC 13129 / Biotype gravis).